We begin with the raw amino-acid sequence, 113 residues long: Integration host factor subunit alpha (113 aa).

Residues 59-80 (GNFQVRDKPPRPGRNPKTGETI) are disordered.

The protein belongs to the bacterial histone-like protein family. In terms of assembly, heterodimer of an alpha and a beta chain.

Functionally, this protein is one of the two subunits of integration host factor, a specific DNA-binding protein that functions in genetic recombination as well as in transcriptional and translational control. The protein is Integration host factor subunit alpha of Bordetella bronchiseptica (strain ATCC BAA-588 / NCTC 13252 / RB50) (Alcaligenes bronchisepticus).